The following is a 495-amino-acid chain: Cobyric acid synthase (495 aa).

Residues 252 to 439 (RIRIAAPMLS…VHGLFAQDAF (188 aa)) form the GATase cobBQ-type domain. The active-site Nucleophile is the cysteine 334. Histidine 431 is a catalytic residue.

Belongs to the CobB/CobQ family. CobQ subfamily.

It participates in cofactor biosynthesis; adenosylcobalamin biosynthesis. Its function is as follows. Catalyzes amidations at positions B, D, E, and G on adenosylcobyrinic A,C-diamide. NH(2) groups are provided by glutamine, and one molecule of ATP is hydrogenolyzed for each amidation. In Hyphomonas neptunium (strain ATCC 15444), this protein is Cobyric acid synthase.